We begin with the raw amino-acid sequence, 514 residues long: ATP synthase subunit alpha (514 aa).

An ATP-binding site is contributed by 170–177 (GDRQIGKT).

This sequence belongs to the ATPase alpha/beta chains family. In terms of assembly, F-type ATPases have 2 components, CF(1) - the catalytic core - and CF(0) - the membrane proton channel. CF(1) has five subunits: alpha(3), beta(3), gamma(1), delta(1), epsilon(1). CF(0) has three main subunits: a(1), b(2) and c(9-12). The alpha and beta chains form an alternating ring which encloses part of the gamma chain. CF(1) is attached to CF(0) by a central stalk formed by the gamma and epsilon chains, while a peripheral stalk is formed by the delta and b chains.

It localises to the cell inner membrane. It catalyses the reaction ATP + H2O + 4 H(+)(in) = ADP + phosphate + 5 H(+)(out). Produces ATP from ADP in the presence of a proton gradient across the membrane. The alpha chain is a regulatory subunit. This Pseudomonas fluorescens (strain SBW25) protein is ATP synthase subunit alpha.